Consider the following 277-residue polypeptide: Collectin-10 (277 aa).

Positions 1–27 (MNGFRVLLRSNLSMLLLLALLHFQSLG) are cleaved as a signal peptide. N-linked (GlcNAc...) asparagine glycosylation is present at Asn11. The segment at 41–103 (THTISPGPKG…IGKKGDKGEK (63 aa)) is disordered. The Collagen-like domain maps to 45–103 (SPGPKGDDGERGDTGEEGKDGKVGRQGPKGVKGELGDMGAQGNIGKSGPIGKKGDKGEK). Residues 49-67 (KGDDGERGDTGEEGKDGKV) show a composition bias toward basic and acidic residues. The C-type lectin domain occupies 155–271 (TEEKFYYIVQ…CHLTMYFVCE (117 aa)). 2 cysteine pairs are disulfide-bonded: Cys176–Cys270 and Cys248–Cys262. Asn258 carries an N-linked (GlcNAc...) asparagine glycan.

It belongs to the COLEC10/COLEC11 family. As to expression, expressed mainly in the liver and stomach, but also in muscles, testes, and intestines.

The protein localises to the secreted. Its subcellular location is the golgi apparatus. It localises to the cytoplasm. Its function is as follows. Lectin that binds to various sugars: galactose &gt; mannose = fucose &gt; N-acetylglucosamine &gt; N-acetylgalactosamine. Acts as a chemoattractant, probably involved in the regulation of cell migration. The chain is Collectin-10 (Colec10) from Mus musculus (Mouse).